The primary structure comprises 281 residues: Hepatitis A virus cellular receptor 2 homolog (281 aa).

A signal peptide spans 1-19 (MFSGLTLNCVLLLLQLLLA). Positions 20–125 (RSLENAYVFE…PGLMNDKKLE (106 aa)) constitute an Ig-like V-type domain. Residues 20–193 (RSLENAYVFE…KDSGETIRTA (174 aa)) lie on the Extracellular side of the membrane. Intrachain disulfides connect cysteine 38-cysteine 111, cysteine 52-cysteine 63, and cysteine 58-cysteine 110. A 1,2-diacyl-sn-glycero-3-phospho-L-serine-binding residues include serine 61 and glutamine 62. Asparagine 74 and asparagine 100 each carry an N-linked (GlcNAc...) asparagine glycan. Residue arginine 112 participates in a 1,2-diacyl-sn-glycero-3-phospho-L-serine binding. Positions 115 and 117 each coordinate Ca(2+). Position 119 (methionine 119) interacts with a 1,2-diacyl-sn-glycero-3-phospho-L-serine. Position 120 (asparagine 120) interacts with Ca(2+). Residues 139-160 (QTAHGDSTTASPRTLTTERNGS) form a disordered region. Threonine 146 carries an O-linked (GalNAc...) threonine glycan. Residue asparagine 172 is glycosylated (N-linked (GlcNAc...) asparagine). The helical transmembrane segment at 194 to 214 (IHIGVGVSAGLTLALIIGVLI) threads the bilayer. Residues 215 to 281 (LKWYSCKKKK…YCYVNSQQPS (67 aa)) lie on the Cytoplasmic side of the membrane. Residues 252-270 (EENIYTIEENVYEVENSNE) form an interaction with BAG6 region. Position 256 is a phosphotyrosine; by ITK (tyrosine 256).

The protein belongs to the immunoglobulin superfamily. TIM family. Interacts with HMGB1; impairs HMGB1 binding to B-DNA and likely HMGB1-mediated innate immune response. Interacts with BAG6. Interacts (phosphorylated) with PIK3R1 and PIK3R2. Interacts (not dependent on its phosphorylation status) with FYN. Interacts (in basal state T-cells) with VAV1; AKT1/2, LCP2, ZAP70, SYK, PIK3R1, FYN, SH3BP2 and SH2D2A. Interacts (in activated T-cells) with LCK and PLCG. Interacts with ILF3; this interaction promotes ILF3 ubiquitination and degradation. In terms of processing, phosphorylated on tyrosine residues; modestly increased after TCR/CD28 stimulation. Can be phosphorylated in the cytoplasmic domain by FYN. Phosphorylation at Tyr-256 is increased by stimulation with ligand LGALS9. N-glycosylated. As to expression, expressed in T-helper type 1 lymphocytes. Not expressed by naive T-cells but up-regulated as they differentiate into T-helper-1 cells. Also expressed by differentiated type 1 CD8+ cytotoxic T-cells. Expressed on peritoneal exudate macrophages, monocytes, and splenic dendritic cells (DCs). Expression on natural killer (NK) cells is inversely associated with IFN-gamma production during the initial 24 hours of LPS-induced endotoxic shock. Expressed on mast cells.

Its subcellular location is the membrane. The protein resides in the cell junction. The protein localises to the secreted. Its function is as follows. Cell surface receptor implicated in modulating innate and adaptive immune responses. Generally accepted to have an inhibiting function. Reports on stimulating functions suggest that the activity may be influenced by the cellular context and/or the respective ligand. Regulates macrophage activation. Inhibits T-helper type 1 lymphocyte (Th1)-mediated auto- and alloimmune responses and promotes immunological tolerance. In CD8+ cells attenuates TCR-induced signaling, specifically by blocking NF-kappaB and NFAT promoter activities resulting in the loss of IL-2 secretion. The function may implicate its association with LCK proposed to impair phosphorylation of TCR subunits. In contrast, shown to activate TCR-induced signaling in T-cells probably implicating ZAP70, LCP2, LCK and FYN. Expressed on Treg cells can inhibit Th17 cell responses. Receptor for LGALS9. Binding to LGALS9 is believed to result in suppression of T-cell responses; the resulting apoptosis of antigen-specific cells may implicate HAVCR2 phosphorylation and disruption of its association with BAG6. Binding to LGALS9 is proposed to be involved in innate immune response to intracellular pathogens. Expressed on Th1 cells interacts with LGALS9 expressed on Mycobacterium tuberculosis-infected macrophages to stimulate antibactericidal activity including IL-1 beta secretion and to restrict intracellular bacterial growth. However, the function as receptor for LGALS9 has been challenged. Also reported to enhance CD8+ T-cell responses to an acute infection such as by Listeria monocytogenes. Receptor for phosphatidylserine (PtSer); PtSer-binding is calcium-dependent. May recognize PtSer on apoptotic cells leading to their phagocytosis. Mediates the engulfment of apoptotic cells by dendritic cells. Expressed on T-cells, promotes conjugation but not engulfment of apoptotic cells. Expressed on dendritic cells (DCs) positively regulates innate immune response and in synergy with Toll-like receptors promotes secretion of TNF-alpha. In tumor-imfiltrating DCs suppresses nucleic acid-mediated innate immune repsonse by interaction with HMGB1 and interfering with nucleic acid-sensing and trafficking of nucleid acids to endosomes. Can enhance mast cell production of Th2 cytokines Il-4, IL-6 and IL-13. Expressed on natural killer (NK) cells acts as a coreceptor to enhance IFN-gamma production in response to LGALS9. In contrast, shown to suppress NK cell-mediated cytotoxicity. Negatively regulates NK cell function in LPS-induced endotoxic shock. This is Hepatitis A virus cellular receptor 2 homolog (Havcr2) from Mus musculus (Mouse).